We begin with the raw amino-acid sequence, 90 residues long: Progonadoliberin-1 (90 aa).

The signal sequence occupies residues 1 to 21; sequence MILKLMAGILLLTVCLEGCSS. Position 22 is a pyrrolidone carboxylic acid (Gln22). Glycine amide is present on Gly31.

It belongs to the GnRH family. In terms of processing, the precursor is cleaved by ACE, which removes the Gly-Lys-Arg peptide at the C-terminus, leading to mature hormone. The mature form of Gonadoliberin-1 is also cleaved and degraded by ACE.

It is found in the secreted. Functionally, stimulates the secretion of gonadotropins; it stimulates the secretion of both luteinizing and follicle-stimulating hormones. This is Progonadoliberin-1 (Gnrh1) from Mus musculus (Mouse).